The following is a 449-amino-acid chain: Putative cytochrome P450 135A1 (449 aa).

A heme-binding site is contributed by Cys383.

It belongs to the cytochrome P450 family. It depends on heme as a cofactor.

The protein is Putative cytochrome P450 135A1 (cyp135A1) of Mycobacterium tuberculosis (strain CDC 1551 / Oshkosh).